Reading from the N-terminus, the 711-residue chain is Serine/threonine-protein kinase ATG1b (711 aa).

In terms of domain architecture, Protein kinase spans 20 to 277 (YAVGRQIGSG…FEEFFHHPFL (258 aa)). Residues 26–34 (IGSGSFSVV) and Lys49 each bind ATP. Residue Asp142 is the Proton acceptor of the active site. 2 disordered regions span residues 318 to 342 (LPFF…TSPM) and 383 to 419 (FEGH…SMDQ). Residues 383–393 (FEGHRLSDRSQ) are compositionally biased toward basic and acidic residues. Polar residues predominate over residues 394 to 410 (FKPSSLPDSRSFSTQGR). Positions 421–424 (YVLI) match the AIM (Atg8-family-interacting motif) motif.

It belongs to the protein kinase superfamily. Ser/Thr protein kinase family.

The protein resides in the cytoplasmic vesicle. It localises to the autophagosome. Serine/threonine protein kinase involved in autophagy. The ATG1-ATG13 protein kinase complex regulates downstream events required for autophagosome enclosure and/or vacuolar delivery. This Arabidopsis thaliana (Mouse-ear cress) protein is Serine/threonine-protein kinase ATG1b.